An 88-amino-acid chain; its full sequence is Small ribosomal subunit protein bS20 (88 aa).

Residues 1-28 (MANIKSQIKRNRQNEKRRLRNKSVKSSL) are disordered. Over residues 7–23 (QIKRNRQNEKRRLRNKS) the composition is skewed to basic residues.

This sequence belongs to the bacterial ribosomal protein bS20 family.

In terms of biological role, binds directly to 16S ribosomal RNA. The polypeptide is Small ribosomal subunit protein bS20 (Salinispora tropica (strain ATCC BAA-916 / DSM 44818 / JCM 13857 / NBRC 105044 / CNB-440)).